A 133-amino-acid polypeptide reads, in one-letter code: Ribosome-binding factor A (133 aa).

It belongs to the RbfA family. Monomer. Binds 30S ribosomal subunits, but not 50S ribosomal subunits or 70S ribosomes.

It is found in the cytoplasm. Functionally, one of several proteins that assist in the late maturation steps of the functional core of the 30S ribosomal subunit. Associates with free 30S ribosomal subunits (but not with 30S subunits that are part of 70S ribosomes or polysomes). Required for efficient processing of 16S rRNA. May interact with the 5'-terminal helix region of 16S rRNA. The polypeptide is Ribosome-binding factor A (Pseudomonas fluorescens (strain ATCC BAA-477 / NRRL B-23932 / Pf-5)).